The primary structure comprises 258 residues: Acyl-[acyl-carrier-protein]--UDP-N-acetylglucosamine O-acyltransferase (258 aa).

It belongs to the transferase hexapeptide repeat family. LpxA subfamily. In terms of assembly, homotrimer.

The protein resides in the cytoplasm. The enzyme catalyses a (3R)-hydroxyacyl-[ACP] + UDP-N-acetyl-alpha-D-glucosamine = a UDP-3-O-[(3R)-3-hydroxyacyl]-N-acetyl-alpha-D-glucosamine + holo-[ACP]. It functions in the pathway glycolipid biosynthesis; lipid IV(A) biosynthesis; lipid IV(A) from (3R)-3-hydroxytetradecanoyl-[acyl-carrier-protein] and UDP-N-acetyl-alpha-D-glucosamine: step 1/6. Involved in the biosynthesis of lipid A, a phosphorylated glycolipid that anchors the lipopolysaccharide to the outer membrane of the cell. This Neisseria gonorrhoeae (strain ATCC 700825 / FA 1090) protein is Acyl-[acyl-carrier-protein]--UDP-N-acetylglucosamine O-acyltransferase.